The sequence spans 195 residues: dCTP deaminase (195 aa).

Residues 105–110 (RSSLGR), D123, 131–133 (TLE), Q152, Y166, K173, and Q177 each bind dCTP. E133 serves as the catalytic Proton donor/acceptor. Residues 159–195 (KSPAERPYGAERGSKYQGQTGPQASRIQGDREFGGDQ) are disordered. The span at 160 to 172 (SPAERPYGAERGS) shows a compositional bias: basic and acidic residues. Residues 174 to 184 (YQGQTGPQASR) show a composition bias toward polar residues. The span at 186-195 (QGDREFGGDQ) shows a compositional bias: basic and acidic residues.

This sequence belongs to the dCTP deaminase family. As to quaternary structure, homotrimer.

It catalyses the reaction dCTP + H2O + H(+) = dUTP + NH4(+). It functions in the pathway pyrimidine metabolism; dUMP biosynthesis; dUMP from dCTP (dUTP route): step 1/2. Its function is as follows. Catalyzes the deamination of dCTP to dUTP. The protein is dCTP deaminase of Natronomonas pharaonis (strain ATCC 35678 / DSM 2160 / CIP 103997 / JCM 8858 / NBRC 14720 / NCIMB 2260 / Gabara) (Halobacterium pharaonis).